A 137-amino-acid polypeptide reads, in one-letter code: Histone H2B (137 aa).

The span at 1 to 10 (MPPKAADKKP) shows a compositional bias: basic and acidic residues. Residues 1 to 45 (MPPKAADKKPASKAPATASKAPEKKDAGKKTAASGDKKKRTKTRK) form a disordered region. Residues Lys-8 and Lys-9 each carry the N6-acetyllysine; alternate modification. Residues Lys-8 and Lys-9 each participate in a glycyl lysine isopeptide (Lys-Gly) (interchain with G-Cter in SUMO); alternate cross-link. Ser-12 is subject to Phosphoserine. Lys-13 is subject to N6-acetyllysine. Lys-24 bears the N6-acetyllysine; alternate mark. Lys-24 is covalently cross-linked (Glycyl lysine isopeptide (Lys-Gly) (interchain with G-Cter in SUMO); alternate). Residue Lys-25 forms a Glycyl lysine isopeptide (Lys-Gly) (interchain with G-Cter in SUMO) linkage. Residue Lys-131 forms a Glycyl lysine isopeptide (Lys-Gly) (interchain with G-Cter in ubiquitin) linkage.

It belongs to the histone H2B family. As to quaternary structure, the nucleosome is a histone octamer containing two molecules each of H2A, H2B, H3 and H4 assembled in one H3-H4 heterotetramer and two H2A-H2B heterodimers. The octamer wraps approximately 147 bp of DNA. Post-translationally, monoubiquitinated by the UBC2-BRE1 complex to form H2BK123ub1. H2BK123ub1 gives a specific tag for epigenetic transcriptional activation and is also prerequisite for H3K4me and H3K79me formation. H2BK123ub1 also modulates the formation of double-strand breaks during meiosis and is a prerequisite for DNA-damage checkpoint activation. Phosphorylated by STE20 to form H2BS10ph during progression through meiotic prophase. May be correlated with chromosome condensation. In terms of processing, acetylated by GCN5 to form H2BK11ac and H2BK16ac. H2BK16ac can also be formed by ESA1. Acetylation of N-terminal lysines and particularly formation of H2BK11acK16ac has a positive effect on transcription. Post-translationally, sumoylation to form H2BK6su or H2BK7su, and probably also H2BK16su or H2BK17su, occurs preferentially near the telomeres and represses gene transcription.

Its subcellular location is the nucleus. It localises to the chromosome. In terms of biological role, core component of nucleosome. Nucleosomes wrap and compact DNA into chromatin, limiting DNA accessibility to the cellular machineries which require DNA as a template. Histones thereby play a central role in transcription regulation, DNA repair, DNA replication and chromosomal stability. DNA accessibility is regulated via a complex set of post-translational modifications of histones, also called histone code, and nucleosome remodeling. This Pyricularia oryzae (strain Y34) (Rice blast fungus) protein is Histone H2B (HTB1).